Reading from the N-terminus, the 457-residue chain is Omega-hydroxypalmitate O-feruloyl transferase (457 aa).

Residues histidine 184 and aspartate 404 each act as proton acceptor in the active site.

This sequence belongs to the plant acyltransferase family. As to expression, expressed in roots, seedlings, leaves, stems, flowers and siliques. Detected at the protein level in roots and in seed coats.

It catalyses the reaction 16-hydroxyhexadecanoate + (E)-feruloyl-CoA = 16-feruloyloxyhexadecanoate + CoA. Involved in the synthesis of aromatics of the suberin polymer. Specifically affects the accumulation of the ferulate constituent of suberin in roots and seeds, but has no effect on the content of p-coumarate or sinapate. The sequence is that of Omega-hydroxypalmitate O-feruloyl transferase (HHT1) from Arabidopsis thaliana (Mouse-ear cress).